The primary structure comprises 123 residues: Protein Wnt-7 (123 aa).

A lipid anchor (O-palmitoleoyl serine; by PORCN) is attached at serine 1. Cysteine 89 and cysteine 104 are oxidised to a cystine. N-linked (GlcNAc...) asparagine glycosylation occurs at asparagine 90.

This sequence belongs to the Wnt family. Post-translationally, palmitoleoylation is required for efficient binding to frizzled receptors. Depalmitoleoylation leads to Wnt signaling pathway inhibition.

Its subcellular location is the secreted. The protein resides in the extracellular space. It localises to the extracellular matrix. Functionally, ligand for members of the frizzled family of seven transmembrane receptors. Probable developmental protein. May be a signaling molecule which affects the development of discrete regions of tissues. Is likely to signal over only few cell diameters. This Evasterias troschelii (Mottled sea star) protein is Protein Wnt-7 (WNT-7).